The following is a 1378-amino-acid chain: S-cell enriched with leucine-rich repeat-containing protein slrA (1378 aa).

Residues 17 to 37 (IFKILYCYLFTSLLLILSTWV) traverse the membrane as a helical segment. 5 N-linked (GlcNAc...) asparagine glycosylation sites follow: Asn59, Asn112, Asn143, Asn172, and Asn201. 9 LRR repeats span residues 143–165 (NLTG…LPYL), 167–188 (HLRN…GLLK), 191–212 (SLVA…ADSK), 213–235 (AISY…WKTP), 236–257 (NLLF…EFFR), 260–281 (SLDY…LSKS), 282–304 (RISY…TCWK), 307–329 (SLRI…IFDH), and 331–353 (PLQY…LDCA). N-linked (GlcNAc...) asparagine glycans are attached at residues Asn265, Asn287, and Asn296. 20 N-linked (GlcNAc...) asparagine glycosylation sites follow: Asn416, Asn436, Asn451, Asn491, Asn513, Asn596, Asn605, Asn634, Asn704, Asn710, Asn740, Asn741, Asn771, Asn788, Asn801, Asn826, Asn843, Asn861, Asn875, and Asn907. The stretch at 886–946 (SLNNNNNNNN…NNNENNNENK (61 aa)) forms a coiled coil. A compositionally biased stretch (low complexity) spans 891–909 (NNNNNNNNNKNNNNNNNDS). The interval 891-945 (NNNNNNNNNKNNNNNNNDSNNEKEVVEDEEEDLDYSSQNDNNNINNNNNENNNEN) is disordered. Positions 915–924 (VVEDEEEDLD) are enriched in acidic residues. Over residues 929 to 945 (NDNNNINNNNNENNNEN) the composition is skewed to low complexity. N-linked (GlcNAc...) asparagine glycans are attached at residues Asn953, Asn970, Asn1090, and Asn1100. Residues 1160 to 1180 (YYIVFFGCASGLILVLVICIV) traverse the membrane as a helical segment. Residues 1227–1276 (DLNNNNNNNNNNNNNNNNNNNNNNNNNNNNNNNNNFNDGSDTFNNNNKKN) show a composition bias toward low complexity. Residues 1227-1378 (DLNNNNNNNN…KKHLTIINKK (152 aa)) form a disordered region. Residues 1289–1304 (DGKENDIKNINNKKDE) are compositionally biased toward basic and acidic residues. Acidic residues predominate over residues 1305 to 1324 (KEDDGDDDDDEDDDEYEDDT). Residues 1328-1353 (SSGNSSRSKGSDGGSSSNSLSSDKQS) are compositionally biased toward low complexity. N-linked (GlcNAc...) asparagine glycosylation is found at Asn1331 and Asn1360. A compositionally biased stretch (polar residues) spans 1354-1364 (FNNGNENNSII). Over residues 1368-1378 (KKKHLTIINKK) the composition is skewed to basic residues.

It localises to the membrane. This chain is S-cell enriched with leucine-rich repeat-containing protein slrA (slrA), found in Dictyostelium discoideum (Social amoeba).